The following is a 370-amino-acid chain: Early nodulin-like protein 1 (370 aa).

Positions 1–27 (MSAIMKSLCFSFLILASFATFFSVADA) are cleaved as a signal peptide. The 102-residue stretch at 28-129 (WRFNVGGNGA…GQKLIVVVLA (102 aa)) folds into the Phytocyanin domain. N-linked (GlcNAc...) asparagine glycosylation is present at N58. Cysteines 83 and 117 form a disulfide. Positions 135-175 (SAPAHSPVPSVSPTQPPKSHSPVSPVAPASAPSKSQPPRSS) are enriched in low complexity. A disordered region spans residues 135-347 (SAPAHSPVPS…PAPSPRTNSA (213 aa)). Over residues 176-194 (VSPAQPPKSSSPISHTPAL) the composition is skewed to polar residues. 2 stretches are compositionally biased toward low complexity: residues 195 to 205 (SPSHATSHSPA) and 215 to 290 (SPVS…QSPA). The span at 291–305 (TPSPMTPQSPSPVSS) shows a compositional bias: pro residues. Residues 306-318 (PSPDQSAAPSDQS) are compositionally biased toward low complexity. The span at 319-334 (TPLAPSPSETTPTADN) shows a compositional bias: polar residues. N-linked (GlcNAc...) asparagine glycosylation occurs at N334. The GPI-anchor amidated asparagine moiety is linked to residue N345. A propeptide spans 346 to 370 (SASGLAVTSVMSTLFSATFTFLMFA) (removed in mature form).

It belongs to the early nodulin-like (ENODL) family. In terms of tissue distribution, mostly expressed in stems, leaves and flowers, and, to a lower extent, in seedlings, roots and seeds.

It is found in the cell membrane. Functionally, may act as a carbohydrate transporter. The polypeptide is Early nodulin-like protein 1 (Arabidopsis thaliana (Mouse-ear cress)).